The sequence spans 658 residues: Exoribonuclease 2 (658 aa).

The RNB domain occupies 189–530; that stretch reads REDLTSLYFT…VNHRLIKQVL (342 aa). The S1 motif domain maps to 576–658; sequence AVEFDCEIAD…ETRSIVGNII (83 aa).

The protein belongs to the RNR ribonuclease family. RNase II subfamily.

The protein resides in the cytoplasm. The catalysed reaction is Exonucleolytic cleavage in the 3'- to 5'-direction to yield nucleoside 5'-phosphates.. Involved in mRNA degradation. Hydrolyzes single-stranded polyribonucleotides processively in the 3' to 5' direction. This Actinobacillus pleuropneumoniae serotype 5b (strain L20) protein is Exoribonuclease 2.